A 374-amino-acid chain; its full sequence is Flagellar P-ring protein 1 (374 aa).

Residues 1–29 (MPGVRWVRIVGVACAALSALALSVTSASA) form the signal peptide.

Belongs to the FlgI family. The basal body constitutes a major portion of the flagellar organelle and consists of four rings (L,P,S, and M) mounted on a central rod.

The protein resides in the periplasm. The protein localises to the bacterial flagellum basal body. Assembles around the rod to form the L-ring and probably protects the motor/basal body from shearing forces during rotation. This is Flagellar P-ring protein 1 from Bradyrhizobium diazoefficiens (strain JCM 10833 / BCRC 13528 / IAM 13628 / NBRC 14792 / USDA 110).